The following is an 885-amino-acid chain: DNA replication licensing factor REC (885 aa).

Residues 36–76 form a disordered region; the sequence is RVIPAGGNRQPNQGEPGAPDAPSVPPATRQPRGWSRTAGKR. Residues 281-308 form a C4-type zinc finger; sequence CSRCQMEIAMRQRGTFQPRPYQCKRSEC. The MCM domain maps to 430–627; sequence SFKLLVQSIA…ERDMSLTAHV (198 aa). 473–480 contributes to the ATP binding site; it reads GDPGIGKT. Residues 796–805 show a composition bias toward polar residues; sequence SLKEGSSRQG. Positions 796 to 818 are disordered; that stretch reads SLKEGSSRQGTRGGGGAGGGAGK. A compositionally biased stretch (gly residues) spans 806-817; the sequence is TRGGGGAGGGAG.

The protein belongs to the MCM family.

Its subcellular location is the nucleus. Functionally, required for meiotic DNA recombination in females. Probably not involved in DNA repair and recombination in somatic cells. The protein is DNA replication licensing factor REC (rec) of Drosophila melanogaster (Fruit fly).